Reading from the N-terminus, the 93-residue chain is Defensin-like protein 209 (93 aa).

The signal sequence occupies residues 1 to 19 (MKITILFLTLLVLSSSCTS). 3 disulfide bridges follow: Cys63–Cys80, Cys66–Cys85, and Cys70–Cys87.

It belongs to the DEFL family.

Its subcellular location is the secreted. The sequence is that of Defensin-like protein 209 from Arabidopsis thaliana (Mouse-ear cress).